An 87-amino-acid polypeptide reads, in one-letter code: Small ribosomal subunit protein bS20 (87 aa).

This sequence belongs to the bacterial ribosomal protein bS20 family.

Its function is as follows. Binds directly to 16S ribosomal RNA. This is Small ribosomal subunit protein bS20 from Corynebacterium diphtheriae (strain ATCC 700971 / NCTC 13129 / Biotype gravis).